The primary structure comprises 490 residues: Glucose-6-phosphate 1-dehydrogenase (490 aa).

NADP(+)-binding positions include R49, 91 to 92 (DV), and K146. H176, K180, E214, and D233 together coordinate substrate. Residue H238 is the Proton acceptor of the active site. Residues K338 and K343 each coordinate substrate.

This sequence belongs to the glucose-6-phosphate dehydrogenase family.

It carries out the reaction D-glucose 6-phosphate + NADP(+) = 6-phospho-D-glucono-1,5-lactone + NADPH + H(+). It functions in the pathway carbohydrate degradation; pentose phosphate pathway; D-ribulose 5-phosphate from D-glucose 6-phosphate (oxidative stage): step 1/3. Functionally, catalyzes the oxidation of glucose 6-phosphate to 6-phosphogluconolactone. The sequence is that of Glucose-6-phosphate 1-dehydrogenase from Buchnera aphidicola subsp. Schizaphis graminum (strain Sg).